Here is a 394-residue protein sequence, read N- to C-terminus: GDNF family receptor alpha-like (394 aa).

The first 19 residues, 1 to 19, serve as a signal peptide directing secretion; that stretch reads MLVFIFLAVRLSSENESSS. At 20–350 the chain is on the extracellular side; sequence QTNDCAYFMR…LTGFNSPFSG (331 aa). 3 N-linked (GlcNAc...) asparagine glycosylation sites follow: N65, N101, and N115. Cystine bridges form between C132-C190, C139-C145, C156-C168, C163-C211, C192-C199, C221-C292, C228-C234, C245-C276, C253-C259, C270-C317, and C294-C305. Residues 150-229 are required for interaction with GDF15; the sequence is ALYLKACTAN…TCLSVIHTCR (80 aa). A helical membrane pass occupies residues 351 to 371; the sequence is ELIYVVVCMVVTSGILSLVML. Residues 372-394 lie on the Cytoplasmic side of the membrane; sequence KLRIPSKKRDPAPIEIAGAVIIQ.

Belongs to the GDNFR family. As to quaternary structure, interacts (via the extracellular domain) with GDF15 and RET; receptor of GDF15, mediates cellular signaling through interaction with RET after GDF15-binding. Interaction with RET requires previous GDF15-binding. In terms of processing, cleaved and inactivated by MMP14, inhibiting the GDF15-GFRAL aversive response. In terms of tissue distribution, expressed in the brainstem, restricted to cells in the area postrema and the immediately adjacent region of the nucleus tractus solitarius. Detected at low levels in testis.

The protein localises to the cell membrane. Brainstem-restricted receptor for GDF15 hormone, which triggers an aversive response, characterized by nausea, vomiting, and/or loss of appetite in response to various stresses. The aversive response is both required to reduce continuing exposure to those stresses at the time of exposure and to promote avoidance behavior in the future. The GDF15-GFRAL aversive response is triggered by stresses, such as anticancer drugs (camptothecin or cisplatin), cancers or drugs such as metformin. Upon interaction with its ligand, GDF15, mediates the GDF15-induced autophosphorylation and activation of the RET tyrosine kinase receptor, leading to activation of MAPK- and AKT- signaling pathways. Ligand-binding activates GFRAL-expressing neurons localized in the area postrema and nucleus tractus solitarius of the brainstem. The GDF15-GFRAL signal induces expression of genes involved in metabolism, such as lipid metabolism in adipose tissues. The polypeptide is GDNF family receptor alpha-like (Rattus norvegicus (Rat)).